We begin with the raw amino-acid sequence, 287 residues long: uncharacterized protein (287 aa).

An N-terminal signal peptide occupies residues methionine 1–glycine 20. The Extracellular portion of the chain corresponds to tyrosine 22–lysine 201. Residues asparagine 120, asparagine 154, and asparagine 166 are each glycosylated (N-linked (GlcNAc...) asparagine). The helical transmembrane segment at alanine 202–alanine 222 threads the bilayer. Residues tyrosine 223–histidine 287 lie on the Cytoplasmic side of the membrane.

The protein resides in the membrane. This is an uncharacterized protein from Schizosaccharomyces pombe (strain 972 / ATCC 24843) (Fission yeast).